Reading from the N-terminus, the 426-residue chain is Mitochondrial distribution and morphology protein 12 (426 aa).

Positions 1–426 constitute an SMP-LTD domain; sequence MSIEVDWKTA…VFPSFWTFLI (426 aa). Disordered regions lie at residues 88–147, 185–264, and 346–370; these read AHGN…GTPG, WTDH…FRFP, and ADDQETRDKDDHPRSGLDPTTSPKR. Over residues 96-109 the composition is skewed to basic and acidic residues; sequence THSELNEPPYRDEV. Positions 216 to 236 are enriched in low complexity; it reads SSNPTSRPSTSSTLPSHPSGS. 2 stretches are compositionally biased toward basic and acidic residues: residues 244 to 264 and 349 to 360; these read SHPEEEHLDDPAEPDHPFRFP and QETRDKDDHPRS.

This sequence belongs to the MDM12 family. In terms of assembly, component of the ER-mitochondria encounter structure (ERMES) or MDM complex, composed of mmm1, mdm10, mdm12 and mdm34. A mmm1 homodimer associates with one molecule of mdm12 on each side in a pairwise head-to-tail manner, and the SMP-LTD domains of mmm1 and mdm12 generate a continuous hydrophobic tunnel for phospholipid trafficking.

It is found in the mitochondrion outer membrane. Its subcellular location is the endoplasmic reticulum membrane. Its function is as follows. Component of the ERMES/MDM complex, which serves as a molecular tether to connect the endoplasmic reticulum (ER) and mitochondria. Components of this complex are involved in the control of mitochondrial shape and protein biogenesis, and function in nonvesicular lipid trafficking between the ER and mitochondria. Mdm12 is required for the interaction of the ER-resident membrane protein mmm1 and the outer mitochondrial membrane-resident beta-barrel protein mdm10. The mdm12-mmm1 subcomplex functions in the major beta-barrel assembly pathway that is responsible for biogenesis of all mitochondrial outer membrane beta-barrel proteins, and acts in a late step after the SAM complex. The mdm10-mdm12-mmm1 subcomplex further acts in the TOM40-specific pathway after the action of the mdm12-mmm1 complex. Essential for establishing and maintaining the structure of mitochondria and maintenance of mtDNA nucleoids. The protein is Mitochondrial distribution and morphology protein 12 of Aspergillus terreus (strain NIH 2624 / FGSC A1156).